We begin with the raw amino-acid sequence, 666 residues long: uncharacterized protein (666 aa).

Residues 263-553 form the RNB domain; sequence RFDLTTLKTY…THFQMKAYLR (291 aa).

This sequence belongs to the RNR ribonuclease family.

This is an uncharacterized protein from Synechocystis sp. (strain ATCC 27184 / PCC 6803 / Kazusa).